Consider the following 207-residue polypeptide: MTLPDFRLIRLLPLASLVLTACTLPVHKEPGKSPDSPQWRQHQQEVRNLNQYQTRGAFAYISDDQKVYARFFWQQTGQDRYRLLLTNPLGSTELELNAQPGNVQLVDNKGQRYTADDAEEMIGKLTGMPIPLNSLRQWILGLPGDATDYKLDDQYRLSEVNYRQDGKNWKVVYGGYDSKTQPAMPANMELSDGSQRIKLKMDNWIVK.

Positions 1-21 are cleaved as a signal peptide; the sequence is MTLPDFRLIRLLPLASLVLTA. Cysteine 22 carries N-palmitoyl cysteine lipidation. Cysteine 22 carries S-diacylglycerol cysteine lipidation.

The protein belongs to the LolB family. As to quaternary structure, monomer.

It localises to the cell outer membrane. Plays a critical role in the incorporation of lipoproteins in the outer membrane after they are released by the LolA protein. This Salmonella arizonae (strain ATCC BAA-731 / CDC346-86 / RSK2980) protein is Outer-membrane lipoprotein LolB.